The following is a 206-amino-acid chain: Pyridoxal 5'-phosphate synthase subunit PdxT (206 aa).

59 to 61 contributes to the L-glutamine binding site; sequence GES. Cysteine 91 functions as the Nucleophile in the catalytic mechanism. Residues arginine 123 and 151 to 152 each bind L-glutamine; that span reads IR. Residues histidine 187 and glutamate 189 each act as charge relay system in the active site.

Belongs to the glutaminase PdxT/SNO family. In terms of assembly, in the presence of PdxS, forms a dodecamer of heterodimers. Only shows activity in the heterodimer.

It catalyses the reaction aldehydo-D-ribose 5-phosphate + D-glyceraldehyde 3-phosphate + L-glutamine = pyridoxal 5'-phosphate + L-glutamate + phosphate + 3 H2O + H(+). It carries out the reaction L-glutamine + H2O = L-glutamate + NH4(+). The protein operates within cofactor biosynthesis; pyridoxal 5'-phosphate biosynthesis. Catalyzes the hydrolysis of glutamine to glutamate and ammonia as part of the biosynthesis of pyridoxal 5'-phosphate. The resulting ammonia molecule is channeled to the active site of PdxS. This chain is Pyridoxal 5'-phosphate synthase subunit PdxT, found in Mycobacterium sp. (strain KMS).